The primary structure comprises 129 residues: Small ribosomal subunit protein uS11 (129 aa).

Belongs to the universal ribosomal protein uS11 family. In terms of assembly, part of the 30S ribosomal subunit. Interacts with proteins S7 and S18. Binds to IF-3.

Located on the platform of the 30S subunit, it bridges several disparate RNA helices of the 16S rRNA. Forms part of the Shine-Dalgarno cleft in the 70S ribosome. This Azorhizobium caulinodans (strain ATCC 43989 / DSM 5975 / JCM 20966 / LMG 6465 / NBRC 14845 / NCIMB 13405 / ORS 571) protein is Small ribosomal subunit protein uS11.